A 214-amino-acid chain; its full sequence is Adenylate kinase (214 aa).

10 to 15 (GAGKGT) contacts ATP. The interval 30–59 (STGDMLRAAIKAGTELGLKAKAVMDAGQLV) is NMP. AMP is bound by residues threonine 31, arginine 36, 57–59 (QLV), 85–88 (GFPR), and glutamine 92. The tract at residues 122-159 (GRRVHSGSGRTYHVVFNPPKVEGKDDVTGEDLVIRADD) is LID. ATP contacts are provided by residues arginine 123 and 132 to 133 (TY). Residues arginine 156 and arginine 167 each contribute to the AMP site. Position 200 (glutamine 200) interacts with ATP.

Belongs to the adenylate kinase family. As to quaternary structure, monomer.

It is found in the cytoplasm. The enzyme catalyses AMP + ATP = 2 ADP. Its pathway is purine metabolism; AMP biosynthesis via salvage pathway; AMP from ADP: step 1/1. Catalyzes the reversible transfer of the terminal phosphate group between ATP and AMP. Plays an important role in cellular energy homeostasis and in adenine nucleotide metabolism. The sequence is that of Adenylate kinase from Aeromonas hydrophila subsp. hydrophila (strain ATCC 7966 / DSM 30187 / BCRC 13018 / CCUG 14551 / JCM 1027 / KCTC 2358 / NCIMB 9240 / NCTC 8049).